The primary structure comprises 644 residues: NADH-ubiquinone oxidoreductase chain 5 (644 aa).

The next 18 helical transmembrane spans lie at 4–23 (FITLPLLNVIISGLLSRYIG), 30–49 (LNIINLFIILILLIYYYINI), 78–100 (DLLSITMLIPIILISLIVNIFAW), 112–129 (FYTYLALFTLFMIILVLG), 133–155 (LILFLGWEYIGIASFLLIGFWYN), 167–189 (LFINKIGDIFFIIALIYLIYIYK), 199–221 (LVSYINIDINNIIILCLVIAASA), 234–256 (WAMAGPTPVSVLLHAATLVIAGI), 271–293 (NILLFNLWLGAITSLISGLIAIN), 300–322 (IIALSTMSQLGIMFISIGLSSYN), 327–349 (HVLCHSLYKALLFICAGTIIHSL), 361–383 (GLLIYMPITYICMLIGSLSLMGL), 398–420 (SSIGIFTISGLIIYWLVVLSSLL), 466–488 (SWMAIICMIILSIGSLFIGYLLQ), 517–539 (INIYYKWIPIFNIFISILLIIYL), 546–568 (LLYIYNNPLFYNFYILFNTRFLF), 594–616 (GFLYTLGPNGLNYLLNLLSFNII), and 623–642 (FNHYLIYISFSLLLFIYLQF).

The protein belongs to the complex I subunit 5 family.

Its subcellular location is the mitochondrion inner membrane. It carries out the reaction a ubiquinone + NADH + 5 H(+)(in) = a ubiquinol + NAD(+) + 4 H(+)(out). Its function is as follows. Core subunit of the mitochondrial membrane respiratory chain NADH dehydrogenase (Complex I) that is believed to belong to the minimal assembly required for catalysis. Complex I functions in the transfer of electrons from NADH to the respiratory chain. The immediate electron acceptor for the enzyme is believed to be ubiquinone. The sequence is that of NADH-ubiquinone oxidoreductase chain 5 (ND5) from Wickerhamomyces canadensis (Yeast).